A 222-amino-acid chain; its full sequence is UPF0173 metal-dependent hydrolase Mboo_0816 (222 aa).

It belongs to the UPF0173 family.

This chain is UPF0173 metal-dependent hydrolase Mboo_0816, found in Methanoregula boonei (strain DSM 21154 / JCM 14090 / 6A8).